The sequence spans 472 residues: Adenylyl cyclase-associated protein 1 (472 aa).

Residue Ala2 is modified to N-acetylalanine. At Tyr31 the chain carries Phosphotyrosine. Ser34 carries the phosphoserine modification. At Lys81 the chain carries N6-acetyllysine. The disordered stretch occupies residues Glu216–Ser253. Over residues Ser218–Ser228 the composition is skewed to low complexity. The span at Gly229 to Pro243 shows a compositional bias: pro residues. Over residues Thr244 to Ser253 the composition is skewed to low complexity. Residue Lys287 is modified to N6-methyllysine. 3 positions are modified to phosphoserine: Ser290, Ser295, and Ser301. Residues Ser290–Ala312 form a disordered region. Residues Pro307–Val450 form the C-CAP/cofactor C-like domain. Residue Lys345 forms a Glycyl lysine isopeptide (Lys-Gly) (interchain with G-Cter in SUMO1) linkage.

The protein belongs to the CAP family. Homodimer. Binds actin monomers.

The protein resides in the cell membrane. Functionally, directly regulates filament dynamics and has been implicated in a number of complex developmental and morphological processes, including mRNA localization and the establishment of cell polarity. The protein is Adenylyl cyclase-associated protein 1 (CAP1) of Bos taurus (Bovine).